Reading from the N-terminus, the 101-residue chain is Large ribosomal subunit protein bL28 (101 aa).

This sequence belongs to the bacterial ribosomal protein bL28 family.

This chain is Large ribosomal subunit protein bL28, found in Rhodopseudomonas palustris (strain BisA53).